A 67-amino-acid polypeptide reads, in one-letter code: ATP synthase F(0) complex subunit 8 (67 aa).

The helical transmembrane segment at 8 to 24 (TWFTVILSMIISLFMLL) threads the bilayer. K54 is modified (N6-acetyllysine; alternate). At K54 the chain carries N6-succinyllysine; alternate. Residue K57 is modified to N6-acetyllysine.

This sequence belongs to the ATPase protein 8 family. In terms of assembly, component of the ATP synthase complex composed at least of ATP5F1A/subunit alpha, ATP5F1B/subunit beta, ATP5MC1/subunit c (homooctomer), MT-ATP6/subunit a, MT-ATP8/subunit 8, ATP5ME/subunit e, ATP5MF/subunit f, ATP5MG/subunit g, ATP5MK/subunit k, ATP5MJ/subunit j, ATP5F1C/subunit gamma, ATP5F1D/subunit delta, ATP5F1E/subunit epsilon, ATP5PF/subunit F6, ATP5PB/subunit b, ATP5PD/subunit d, ATP5PO/subunit OSCP. ATP synthase complex consists of a soluble F(1) head domain (subunits alpha(3) and beta(3)) - the catalytic core - and a membrane F(0) domain - the membrane proton channel (subunits c, a, 8, e, f, g, k and j). These two domains are linked by a central stalk (subunits gamma, delta, and epsilon) rotating inside the F1 region and a stationary peripheral stalk (subunits F6, b, d, and OSCP). Interacts with PRICKLE3.

Its subcellular location is the mitochondrion membrane. Its function is as follows. Subunit 8, of the mitochondrial membrane ATP synthase complex (F(1)F(0) ATP synthase or Complex V) that produces ATP from ADP in the presence of a proton gradient across the membrane which is generated by electron transport complexes of the respiratory chain. ATP synthase complex consist of a soluble F(1) head domain - the catalytic core - and a membrane F(1) domain - the membrane proton channel. These two domains are linked by a central stalk rotating inside the F(1) region and a stationary peripheral stalk. During catalysis, ATP synthesis in the catalytic domain of F(1) is coupled via a rotary mechanism of the central stalk subunits to proton translocation. In vivo, can only synthesize ATP although its ATP hydrolase activity can be activated artificially in vitro. Part of the complex F(0) domain. The chain is ATP synthase F(0) complex subunit 8 from Cavia porcellus (Guinea pig).